The primary structure comprises 311 residues: Oxidoreductase NAD-binding domain-containing protein 1 (311 aa).

A signal peptide spans 1–17 (MACAAVMIPGLLRCSVG). The FAD-binding FR-type domain occupies 50 to 186 (HMERTASVLR…GGVGINPLLS (137 aa)). NAD(+) is bound at residue 178–183 (GVGINP).

This Pongo abelii (Sumatran orangutan) protein is Oxidoreductase NAD-binding domain-containing protein 1 (OXNAD1).